A 358-amino-acid chain; its full sequence is Cyclin-D1-binding protein 1 (358 aa).

Interaction with TCF3 stretches follow at residues 1 to 183 (MESA…VDLV) and 149 to 358 (ISYN…EVES). 2 interaction with RPLP0 regions span residues 1–189 (MESA…AHEE) and 238–358 (LIIP…EVES). Residues 1–207 (MESAAVSAAP…DPYCGLLNDI (207 aa)) form a required for interaction with CCND1 region.

Belongs to the CCNDBP1 family. In terms of assembly, interacts with CCND1 and GRAP2. May also interact with COPS5, RPLP0, SIRT6, SYF2 and TCF3. Phosphorylated.

The protein resides in the cytoplasm. Its subcellular location is the nucleus. In terms of biological role, may negatively regulate cell cycle progression. May act at least in part via inhibition of the cyclin-D1/CDK4 complex, thereby preventing phosphorylation of RB1 and blocking E2F-dependent transcription. The sequence is that of Cyclin-D1-binding protein 1 (CCNDBP1) from Bos taurus (Bovine).